A 110-amino-acid polypeptide reads, in one-letter code: uncharacterized protein (110 aa).

A helical membrane pass occupies residues 88–108; it reads LTRICLLIFGIGLVVLIFLKL.

It is found in the membrane. This is an uncharacterized protein from Rickettsia prowazekii (strain Madrid E).